The chain runs to 308 residues: Olfactory receptor 6F1 (308 aa).

Residues 1–25 lie on the Extracellular side of the membrane; the sequence is MDTGNKTLPQDFLLLGFPGSQTLQL. An N-linked (GlcNAc...) asparagine glycan is attached at Asn5. The helical transmembrane segment at 26–46 threads the bilayer; it reads SLFMLFLVMYILTVSGNVAIL. Residues 47-54 are Cytoplasmic-facing; the sequence is MLVSTSHQ. Residues 55-75 form a helical membrane-spanning segment; it reads LHTPMYFFLSNLSFLEIWYTT. At 76–99 the chain is on the extracellular side; that stretch reads AAVPKALAILLGRSQTISFTSCLL. Cys97 and Cys189 form a disulfide bridge. The helical transmembrane segment at 100–120 threads the bilayer; it reads QMYFVFSLGCTEYFLLAAMAY. Over 121–139 the chain is Cytoplasmic; the sequence is DRCLAICYPLHYGAIMSSL. A helical membrane pass occupies residues 140–160; sequence LSAQLALGSWVCGFVAIAVPT. Residues 161–197 are Extracellular-facing; that stretch reads ALISGLSFCGPRAINHFFCDIAPWIALACTNTQAVEL. The chain crosses the membrane as a helical span at residues 198–217; that stretch reads VAFVIAVVVILSSCLITFVS. Over 218–237 the chain is Cytoplasmic; that stretch reads YVYIISTILRIPSASGRSKA. The helical transmembrane segment at 238 to 258 threads the bilayer; it reads FSTCSSHLTVVLIWYGSTVFL. Over 259–271 the chain is Extracellular; the sequence is HVRTSIKDALDLI. Residues 272–292 traverse the membrane as a helical segment; it reads KAVHVLNTVVTPVLNPFIYTL. The Cytoplasmic segment spans residues 293–308; it reads RNKEVRETLLKKWKGK.

Belongs to the G-protein coupled receptor 1 family.

The protein localises to the cell membrane. Odorant receptor. This chain is Olfactory receptor 6F1 (OR6F1), found in Homo sapiens (Human).